Consider the following 544-residue polypeptide: Dihydrolipoyllysine-residue acetyltransferase component of pyruvate dehydrogenase complex (544 aa).

2 Lipoyl-binding domains span residues 1–76 (MYEF…VTID) and 113–188 (IYDF…VLIG). N6-lipoyllysine occurs at positions 42 and 154. In terms of domain architecture, Peripheral subunit-binding (PSBD) spans 242 to 279 (LASPVARKLASDLGVDIATIKGSGEQGRVMKDDVQNSK). The active site involves histidine 516.

The protein belongs to the 2-oxoacid dehydrogenase family. In terms of assembly, forms a 24-polypeptide structural core with octahedral symmetry. (R)-lipoate is required as a cofactor.

The enzyme catalyses N(6)-[(R)-dihydrolipoyl]-L-lysyl-[protein] + acetyl-CoA = N(6)-[(R)-S(8)-acetyldihydrolipoyl]-L-lysyl-[protein] + CoA. Its function is as follows. The pyruvate dehydrogenase complex catalyzes the overall conversion of pyruvate to acetyl-CoA and CO(2). It contains multiple copies of three enzymatic components: pyruvate dehydrogenase (E1), dihydrolipoamide acetyltransferase (E2) and lipoamide dehydrogenase (E3). The protein is Dihydrolipoyllysine-residue acetyltransferase component of pyruvate dehydrogenase complex (pdhC) of Acholeplasma laidlawii.